The primary structure comprises 717 residues: MTSKGMCPVAHGANTEASETPMAWWPKALNLDILHQQDTKTNPMGSSFSYRDELKKLDVGALKKDMKDLLTNSQDWWPADWGHYGGLMIRMAWHSAGSYRIADGRGGAGTGNQRFAPINSWPDNANLDKARRLLWPIKKKYGNKISWADLMILAGTIAYESMGLKTFGFSFGREDIWHPEKDIYWGSEKEWLQKSGGKGSRYSGERELSNPLAAVMMGLIYVNPEGVDGKPDPLKTAQDMRVTFARMAMNDEETVALTAGGHTVGKAHGNGNAANLGPAPEAAPIDEQGLGWMNHKTRGIGRDAVTSGLEGAWTTHPTQWDNGYFNLLLNYDWKLTESPAGAHQYEPINIKEEDKPVDVEDASIRCMPMMTDADIALKMDPEYRKISERFSKDQAYFSETFAKAWFKLTHRDMGPKARYFGPDVPKEELIWQDPIPSGPKSYDIDAVKAKIKASGLSMSDMVTTAWDSARTFRGSDKRGGANGARIRLAPQKDWMGNEPERLARVLAVYEKIGKECGISIADTIILGGNIGIEQAAKAGGFDVKVPFTSGRGDAIQAMTDVESFEVLEPLADGFRNWLKESYVVTPEELLLDRTQLMGLTAQEMTVLIGGMRVLGTNYGGSKQGVFTEKEGVLSNDFFVNLTDMNYLWKPTGQNSYDIVERNTEKTKWTATRADLVFGSNSILRAYAEVYAQDDNKEKFVNDFIAAWTKVMNADLFN.

An N-terminal signal peptide occupies residues 1 to 12 (MTSKGMCPVAHG). A cross-link (tryptophyl-tyrosyl-methioninium (Trp-Tyr) (with M-247)) is located at residues 93–221 (WHSAGSYRIA…LAAVMMGLIY (129 aa)). Residue His94 is the Proton acceptor of the active site. The segment at residues 221–247 (YVNPEGVDGKPDPLKTAQDMRVTFARM) is a cross-link (tryptophyl-tyrosyl-methioninium (Tyr-Met) (with W-93)). Residue His262 coordinates heme b.

It belongs to the peroxidase family. Peroxidase/catalase subfamily. Homodimer or homotetramer. Heme b is required as a cofactor. In terms of processing, formation of the three residue Trp-Tyr-Met cross-link is important for the catalase, but not the peroxidase activity of the enzyme.

The enzyme catalyses H2O2 + AH2 = A + 2 H2O. It catalyses the reaction 2 H2O2 = O2 + 2 H2O. Its function is as follows. Bifunctional enzyme with both catalase and broad-spectrum peroxidase activity. The chain is Catalase-peroxidase from Polynucleobacter asymbioticus (strain DSM 18221 / CIP 109841 / QLW-P1DMWA-1) (Polynucleobacter necessarius subsp. asymbioticus).